We begin with the raw amino-acid sequence, 447 residues long: Putative bacteriocin-SkfA transport system permease protein SkfF (447 aa).

Over 1 to 3 the chain is Cytoplasmic; sequence MPF. Residues 4 to 22 traverse the membrane as a helical segment; it reads LIMLLFVGAIGFQVSFVSR. Residues 23-29 lie on the Extracellular side of the membrane; it reads STTWDMS. The helical transmembrane segment at 30 to 50 threads the bilayer; sequence IAGWVLTGVFILYTAFGLFSN. Residues 51–59 are Cytoplasmic-facing; sequence RLPSQMADI. The helical transmembrane segment at 60 to 80 threads the bilayer; the sequence is IWLYGTATSFSKVVYSVLFFS. Residues 81-85 lie on the Extracellular side of the membrane; it reads VTWKA. Residues 86 to 104 form a helical membrane-spanning segment; sequence LLWIISAIFGDVLIVLLSG. The Cytoplasmic portion of the chain corresponds to 105–113; sequence DHINLLGRS. Residues 114 to 134 form a helical membrane-spanning segment; sequence IIFVGLFFIAEVWLMSVSCAR. The Extracellular portion of the chain corresponds to 135–141; sequence TVKKMKR. The chain crosses the membrane as a helical span at residues 142–160; the sequence is VYVLVFLLMLGIYSICLYR. At 161-189 the chain is on the cytoplasmic side; the sequence is FFFLQHSSGIWESIARFISGVGLVFDTLS. A helical membrane pass occupies residues 190 to 208; that stretch reads PLYVVVFIGIITVSFMTIA. Topologically, residues 209-247 are extracellular; sequence FTSRQVEMKESLVKEAEFWEEFQERQFGSGQIIQKPKTT. The helical transmembrane segment at 248-268 threads the bilayer; sequence WWGLQGLNGIWSFLWLELLLF. The Cytoplasmic portion of the chain corresponds to 269-297; it reads KKYLFFHSIHTVMLSGVFYVVIFMYPEWF. A helical membrane pass occupies residues 298–318; the sequence is YLLFFLIVSAVMLSSYYSGIV. Topologically, residues 319–341 are extracellular; that stretch reads RHSQSGTLHLFPGALWKKIIILE. The helical transmembrane segment at 342 to 360 threads the bilayer; it reads LTNTVWLYILYCVSITFMA. The Cytoplasmic portion of the chain corresponds to 361-363; it reads VGN. A helical membrane pass occupies residues 364–382; sequence LVYWYIYGLGIYIWFMTIR. At 383-404 the chain is on the extracellular side; the sequence is LFAFTHTNRNDIKLSLPQYYKS. The helical transmembrane segment at 405–423 threads the bilayer; the sequence is FFMALGLSGICLYVIHLLT. Residues 424–426 are Cytoplasmic-facing; that stretch reads ADW. The helical transmembrane segment at 427 to 447 threads the bilayer; that stretch reads YTLVVVVCIGSLSWCLFYRFR.

Its subcellular location is the cell membrane. Its function is as follows. Probably part of the ABC transporter SkfEF involved in the export of the bacteriocin SKF. Probably responsible for the translocation of bacteriocin SkfA across the membrane. This Bacillus subtilis (strain 168) protein is Putative bacteriocin-SkfA transport system permease protein SkfF.